Here is a 403-residue protein sequence, read N- to C-terminus: Guanine nucleotide-binding protein alpha-8 subunit (403 aa).

Gly-2 carries the N-myristoyl glycine lipid modification. The S-palmitoyl cysteine moiety is linked to residue Cys-3. A G-alpha domain is found at 31–356 (LDFRILLLGA…KVLMKATKDL (326 aa)). A G1 motif region spans residues 34-47 (RILLLGAGESGKST). GTP-binding positions include 39–46 (GAGESGKS), 174–180 (IMTRVRT), 199–203 (DVGGQ), 268–271 (NKKD), and Ala-324. Residues Ser-46 and Thr-180 each coordinate Mg(2+). The interval 172–180 (DCIMTRVRT) is G2 motif. Residues 195-204 (FRVVDVGGQR) form a G3 motif region. The G4 motif stretch occupies residues 264-271 (FLVLNKKD). A G5 motif region spans residues 322 to 327 (IAARYK). Residues 353 to 403 (TKDLKKSSKQSSKSSLGNSTQNNSNNNNNNNNSNNNNGQTTIDGATAKINS) form a disordered region. Residues 374 to 389 (NNSNNNNNNNNSNNNN) show a composition bias toward low complexity. A compositionally biased stretch (polar residues) spans 390–403 (GQTTIDGATAKINS).

This sequence belongs to the G-alpha family. G proteins are composed of 3 units; alpha, beta and gamma. The alpha chain contains the guanine nucleotide binding site.

Guanine nucleotide-binding proteins (G proteins) are involved as modulators or transducers in various transmembrane signaling systems. G alpha-8 is a potential analog for the G(s)-like G-proteins which stimulate adenylate cyclase in mammals. The sequence is that of Guanine nucleotide-binding protein alpha-8 subunit (gpaH) from Dictyostelium discoideum (Social amoeba).